Consider the following 121-residue polypeptide: MRLSYVFVVFAASLLVTADTLSTNTGVQAANLVGPAQRLLRKHYTAAENDGDSEARALNPEKMKTMWKAGMTVDGYAAKLKLTDKIAAAANSAKAMEKLGETHKMKKLLRYLNYVAEHTAV.

The N-terminal stretch at 1–18 is a signal peptide; it reads MRLSYVFVVFAASLLVTA. Residues 38–56 carry the RxLR-dEER motif; that stretch reads RLLRKHYTAAENDGDSEAR. The tract at residues 57–121 is WY domain; it reads ALNPEKMKTM…LNYVAEHTAV (65 aa).

It belongs to the RxLR effector family.

It is found in the secreted. Its subcellular location is the host cytoplasm. The protein localises to the host nucleus. In terms of biological role, secreted effector involved in P.mirabilis colonization of host plants. May perturb the signaling of cell death associated with plant immunity, via interaction with a host MAP kinase. This chain is RxLR effector protein PexRD2, found in Phytophthora mirabilis.